We begin with the raw amino-acid sequence, 159 residues long: Protein-export protein SecB (159 aa).

The protein belongs to the SecB family. In terms of assembly, homotetramer, a dimer of dimers. One homotetramer interacts with 1 SecA dimer.

The protein localises to the cytoplasm. In terms of biological role, one of the proteins required for the normal export of preproteins out of the cell cytoplasm. It is a molecular chaperone that binds to a subset of precursor proteins, maintaining them in a translocation-competent state. It also specifically binds to its receptor SecA. The polypeptide is Protein-export protein SecB (Pseudomonas fluorescens (strain ATCC BAA-477 / NRRL B-23932 / Pf-5)).